Here is a 655-residue protein sequence, read N- to C-terminus: Alpha-amylase (655 aa).

Glu-123 functions as the Nucleophile in the catalytic mechanism. Catalysis depends on Asp-214, which acts as the Proton donor.

The protein belongs to the glycosyl hydrolase 57 family.

The enzyme catalyses Endohydrolysis of (1-&gt;4)-alpha-D-glucosidic linkages in polysaccharides containing three or more (1-&gt;4)-alpha-linked D-glucose units.. This Pyrococcus abyssi (strain GE5 / Orsay) protein is Alpha-amylase (amyA).